A 328-amino-acid chain; its full sequence is RNA binding protein fox-1 homolog 3 (328 aa).

Over residues 1-30 (MAQPYPPAQYPPPPQNGIPAEYAPPPPHPT) the composition is skewed to pro residues. The segment at 1-106 (MAQPYPPAQY…QPKRLHVSNI (106 aa)) is disordered. Residues 49–87 (TPAQTHPEQPSSDTSTQPITGAQTVPQTDEAAQTDSQPL) show a composition bias toward polar residues. The RRM domain occupies 99–172 (KRLHVSNIPF…NPVVGAVYGP (74 aa)). Asymmetric dimethylarginine; alternate is present on arginine 192. Residue arginine 192 is modified to Omega-N-methylarginine; alternate. Arginine 288 bears the Asymmetric dimethylarginine mark.

Its subcellular location is the nucleus. It is found in the cytoplasm. Pre-mRNA alternative splicing regulator. Regulates alternative splicing of RBFOX2 to enhance the production of mRNA species that are targeted for nonsense-mediated decay (NMD). The polypeptide is RNA binding protein fox-1 homolog 3 (RBFOX3) (Bos taurus (Bovine)).